A 349-amino-acid polypeptide reads, in one-letter code: MQSHAGGSRAPLGLLLICLCLPGLFARSTGAPEEKASPHSGQPSFTSLLNPGQPQPKPDPVNNELLGVLPRLSESPQDGALPEGGSEVPNGPPFWGPPPMESWPSEDPQQGMAAVAEDQLEQMLPEALPYLSRGGRLPEASSARLRQPSLAASYPQDSEAGLQPGSSSLETEAEAFARSPFWFLIHKLLPGSSGRILRPGTSWGSGGAGTGWGTRPMPYPSGIWGSNGLVSGTSLGGRGPYPVRIWGRNGWYPLRILGGNGRYPPVGTWGGYGQYPPVGTWGGYGQYPPVGPWGGYGQYPPVGTWGANCQYPAGSRRPNCRYPAGSWGTKGQNRLPPGAKRPGSSGITP.

An N-terminal signal peptide occupies residues M1–A26. Disordered stretches follow at residues G30 to A113 and Y322 to P349. Residues H39–G52 are compositionally biased toward polar residues. A compositionally biased stretch (pro residues) spans N90–E101.

In terms of assembly, binds to numerous extracellular matrix proteins.

The protein resides in the secreted. It is found in the extracellular space. The protein localises to the extracellular matrix. This is an uncharacterized protein from Mus musculus (Mouse).